We begin with the raw amino-acid sequence, 385 residues long: Acyl-CoA dehydrogenase IpdE1 (385 aa).

FAD is bound by residues 126 to 129 (QGYS) and S161. The Proton acceptor role is filled by E244. 364 to 366 (SNE) provides a ligand contact to FAD.

The protein belongs to the acyl-CoA dehydrogenase family. Heterotetramer composed of 2 IpdE1 subunits and 2 IpdE2 subunits. FAD is required as a cofactor.

It catalyses the reaction 3-[(3aS,4S,5R,7aS)-5-hydroxy-7a-methyl-1-oxo-octahydro-1H-inden-4-yl]propanoyl-CoA + A = (2E)-3-[(3aS,4S,5R,7aS)-5-hydroxy-7a-methyl-1-oxo-octahydro-1H-inden-4-yl]prop-2-enoyl-CoA + AH2. Its pathway is steroid metabolism; cholesterol degradation. Functionally, involved in cholesterol degradation. Catalyzes the dehydrogenation of 5OH-HIP-CoA to 5OH-HIPE-CoA. Can also use octanoyl-CoA and dihydroferuloyl-CoA, with lower efficiency. Cannot use 3-oxo-4-pregnene-20-carboxyl-CoA (3-OPC-CoA). The polypeptide is Acyl-CoA dehydrogenase IpdE1 (Mycobacterium tuberculosis (strain ATCC 25618 / H37Rv)).